A 1247-amino-acid chain; its full sequence is Structural polyprotein (1247 aa).

The tract at residues 52–103 (ALRTVPQKPRRTRKTKKQKQVKQEQQSTRNQKKKAPKQKQTQKKKRPGRRER) is disordered. Basic residues-rich tracts occupy residues 59–71 (KPRR…KQKQ) and 81–100 (NQKK…RPGR). Positions 86-99 (APKQKQTQKKKRPG) are ribosome-binding. Cysteines 112 and 127 form a disulfide. The 149-residue stretch at 112 to 260 (CIFEVKHEGK…KITPEGSVEW (149 aa)) folds into the Peptidase S3 domain. The active-site Charge relay system is His138. Residues 154 to 159 (KRSSKY) form an interaction with spike glycoprotein E2 region. Catalysis depends on charge relay system residues Asp160 and Ser212. Residues 261–273 (SLALPVMCLLANT) form a functions as an uncleaved signal peptide for the precursor of protein E3/E2 region. 9 disulfides stabilise this stretch: Cys268/Cys277, Cys282/Cys286, Cys285/Cys317, Cys343/Cys449, Cys346/Cys352, Cys415/Cys429, Cys477/Cys590, Cys525/Cys549, and Cys527/Cys544. N-linked (GlcNAc...) asparagine; by host glycosylation is present at Asn272. The Extracellular segment spans residues 325 to 691 (NARENFNVYK…YYYELYPTTT (367 aa)). A glycan (N-linked (GlcNAc...) asparagine; by host) is linked at Asn587. A helical transmembrane segment spans residues 692–712 (IAVLAAASIVVASLVSLSLGM). Residues 713–747 (CICARRRCITPYELTPGATIPFLLGVLCCVKTAKA) lie on the Cytoplasmic side of the membrane. The tract at residues 715 to 719 (CARRR) is interaction with the capsid protein. 3 S-palmitoyl cysteine; by host lipidation sites follow: Cys720, Cys740, and Cys741. The segment at 720–740 (CITPYELTPGATIPFLLGVLC) is transient transmembrane before p62-6K protein processing. Cys720 and Cys741 are disulfide-bonded. The Extracellular segment spans residues 748-762 (ASYYEAATYLWNEQQ). Residues 763–783 (PLFWLQLLIPLSAAIVACNCL) traverse the membrane as a helical segment. The Cytoplasmic segment spans residues 784-787 (KLLP). A helical membrane pass occupies residues 788 to 808 (CCCKTLTFLAVMSIGARTVSA). Residues 809–1223 (YEHATVIPNT…AMSWVQKITG (415 aa)) lie on the Extracellular side of the membrane. 4 cysteine pairs are disulfide-bonded: Cys857/Cys922, Cys870/Cys902, Cys871/Cys904, and Cys876/Cys886. The interval 892 to 909 (VYPFMWGGAYCFCDAENT) is E1 fusion peptide loop. 2 N-linked (GlcNAc...) asparagine; by host glycosylation sites follow: Asn949 and Asn1078. 4 disulfide bridges follow: Cys1067/Cys1079, Cys1109/Cys1184, Cys1114/Cys1188, and Cys1136/Cys1178. Residues 1224–1244 (GVGLVVAIAALILIIVLCVSF) traverse the membrane as a helical segment. Cys1241 is lipidated: S-palmitoyl cysteine; by host. Topologically, residues 1245–1247 (SRH) are cytoplasmic.

Homodimer. Homomultimer. Interacts with host karyopherin KPNA4; this interaction allows the nuclear import of the viral capsid protein. Interacts with spike glycoprotein E2. Interacts with host IRAK1; the interaction leads to inhibition of IRAK1-dependent signaling. As to quaternary structure, the precursor of protein E3/E2 and E1 form a heterodimer shortly after synthesis. In terms of assembly, the precursor of protein E3/E2 and E1 form a heterodimer shortly after synthesis. Processing of the precursor of protein E3/E2 into E2 and E3 results in a heterodimer of the spike glycoproteins E2 and E1. Spike at virion surface are constituted of three E2-E1 heterodimers. After target cell attachment and endocytosis, E1 change conformation to form homotrimers. Interacts with 6K protein. Interacts with spike glycoprotein E1. Processing of the precursor of protein E3/E2 into E2 and E3 results in a heterodimer of the spike glycoproteins E2 and E1. Spike at virion surface are constituted of a trimer of E2-E1 heterodimers. Interacts with 6K protein. Interacts with host MXRA8; this interaction mediates virus entry. As to quaternary structure, oligomer. Interacts with spike glycoprotein E1. Interacts with spike glycoprotein E2. Structural polyprotein: Specific enzymatic cleavages in vivo yield mature proteins. Capsid protein is auto-cleaved during polyprotein translation, unmasking a signal peptide at the N-terminus of the precursor of E3/E2. The remaining polyprotein is then targeted to the host endoplasmic reticulum, where host signal peptidase cleaves it into pE2, 6K and E1 proteins. pE2 is further processed to mature E3 and E2 by host furin in trans-Golgi vesicle. In terms of processing, palmitoylated via thioester bonds. These palmitoylations may induce disruption of the C-terminus transmembrane. This would result in the reorientation of E2 C-terminus from lumenal to cytoplasmic side. Post-translationally, N-glycosylated. Palmitoylated via thioester bonds.

Its subcellular location is the virion. The protein localises to the host cytoplasm. It is found in the host cell membrane. The protein resides in the virion membrane. It localises to the host Golgi apparatus. Its subcellular location is the host trans-Golgi network. The protein localises to the host endoplasmic reticulum. The enzyme catalyses Autocatalytic release of the core protein from the N-terminus of the togavirus structural polyprotein by hydrolysis of a -Trp-|-Ser- bond.. In terms of biological role, possesses a protease activity that results in its autocatalytic cleavage from the nascent structural protein. Following its self-cleavage, the capsid protein transiently associates with ribosomes, and within several minutes the protein binds to viral RNA and rapidly assembles into icosahedric core particles. The resulting nucleocapsid eventually associates with the cytoplasmic domain of the spike glycoprotein E2 at the cell membrane, leading to budding and formation of mature virions. In case of infection, new virions attach to target cells and after clathrin-mediated endocytosis their membrane fuses with the host endosomal membrane. This leads to the release of the nucleocapsid into the cytoplasm, followed by an uncoating event necessary for the genomic RNA to become accessible. The uncoating might be triggered by the interaction of capsid proteins with ribosomes. Binding of ribosomes would release the genomic RNA since the same region is genomic RNA-binding and ribosome-binding. Provides the signal sequence for the translocation of the precursor of protein E3/E2 to the host endoplasmic reticulum. Mediates pH protection of spike glycoprotein E1 during the transport via the secretory pathway. Functionally, plays a role in viral attachment to target host cell, by binding to the cell receptor MXRA8. Synthesized as a p62 precursor which is processed by furin at the cell membrane just before virion budding, giving rise to E2-E1 heterodimer. The p62-E1 heterodimer is stable, whereas E2-E1 is unstable and dissociate at low pH. p62 is processed at the last step, presumably to avoid E1 fusion activation before its final export to cell surface. E2 C-terminus contains a transitory transmembrane that would be disrupted by palmitoylation, resulting in reorientation of the C-terminal tail from lumenal to cytoplasmic side. This step is critical since E2 C-terminus is involved in budding by interacting with capsid proteins. This release of E2 C-terminus in cytoplasm occurs lately in protein export, and precludes premature assembly of particles at the endoplasmic reticulum membrane. Its function is as follows. Acts as a viroporin that participates in virus glycoprotein processing and transport to the plasma membrane, cell permeabilization and budding of viral particles. Disrupts the calcium homeostasis of the cell, probably at the endoplasmic reticulum level. This leads to cytoplasmic calcium elevation. Because of its lipophilic properties, the 6K protein is postulated to influence the selection of lipids that interact with the transmembrane domains of the glycoproteins, which, in turn, affects the deformability of the bilayer required for the extreme curvature that occurs as budding proceeds. Present in low amount in virions, about 3% compared to viral glycoproteins. In terms of biological role, class II viral fusion protein. Fusion activity is inactive as long as E1 is bound to E2 in mature virion. After virus attachment to target cell via host MXRA8 and endocytosis, acidification of the endosome induce dissociation of E1/E2 heterodimer and concomitant trimerization of the E1 subunits. This E1 trimer is fusion active, and promotes release of viral nucleocapsid in cytoplasm after endosome and viral membrane fusion. Efficient fusion requires the presence of cholesterol and sphingolipid in the target membrane. This O'nyong-nyong virus (strain SG650) (ONNV) protein is Structural polyprotein.